The primary structure comprises 268 residues: Forkhead box protein R1 (268 aa).

The segment at 91–126 is disordered; it reads EDSCSEASEVQQPLPPCRQKRKQRRSTVPLPLAPGR. Residues 149–248 constitute a DNA-binding region (fork-head); that stretch reads RPPLHYFHLI…KEARTLASTQ (100 aa).

Expressed in adult germ cells (at protein level). Expressed in heart, liver, lung and embryonic brain.

Its subcellular location is the nucleus. It localises to the cytoplasm. It is found in the perinuclear region. In terms of biological role, transcription factor which acts as both an activator and a repressor. Activates transcription of a number of genes including the heat shock chaperones HSPA1A and HSPA6 and the antioxidant NADPH-dependent reductase DHRS2 which are involved in protection against oxidative stress. Required for normal brain development. The sequence is that of Forkhead box protein R1 (Foxr1) from Mus musculus (Mouse).